Reading from the N-terminus, the 60-residue chain is Large ribosomal subunit protein uL30 (60 aa).

The protein belongs to the universal ribosomal protein uL30 family. In terms of assembly, part of the 50S ribosomal subunit.

In Shewanella denitrificans (strain OS217 / ATCC BAA-1090 / DSM 15013), this protein is Large ribosomal subunit protein uL30.